Reading from the N-terminus, the 543-residue chain is Methionine--tRNA ligase (543 aa).

The 'HIGH' region signature appears at 13–23; that stretch reads PYANGPLHVGH. The Zn(2+) site is built by Cys-145, Cys-148, Cys-158, and Cys-161. Residues 334 to 338 carry the 'KMSKS' region motif; that stretch reads QFSKS. Lys-337 contacts ATP.

Belongs to the class-I aminoacyl-tRNA synthetase family. MetG type 1 subfamily. The cofactor is Zn(2+).

It is found in the cytoplasm. It catalyses the reaction tRNA(Met) + L-methionine + ATP = L-methionyl-tRNA(Met) + AMP + diphosphate. In terms of biological role, is required not only for elongation of protein synthesis but also for the initiation of all mRNA translation through initiator tRNA(fMet) aminoacylation. The protein is Methionine--tRNA ligase of Thermoplasma volcanium (strain ATCC 51530 / DSM 4299 / JCM 9571 / NBRC 15438 / GSS1).